The following is a 417-amino-acid chain: Histidine--tRNA ligase (417 aa).

Belongs to the class-II aminoacyl-tRNA synthetase family. Homodimer.

The protein resides in the cytoplasm. The enzyme catalyses tRNA(His) + L-histidine + ATP = L-histidyl-tRNA(His) + AMP + diphosphate + H(+). The sequence is that of Histidine--tRNA ligase from Nitratidesulfovibrio vulgaris (strain DP4) (Desulfovibrio vulgaris).